A 323-amino-acid chain; its full sequence is tRNA dimethylallyltransferase (323 aa).

G12–T19 contributes to the ATP binding site. T14–T19 contacts substrate. Interaction with substrate tRNA regions lie at residues D37–L40 and Q161–R165.

The protein belongs to the IPP transferase family. As to quaternary structure, monomer. Mg(2+) is required as a cofactor.

The catalysed reaction is adenosine(37) in tRNA + dimethylallyl diphosphate = N(6)-dimethylallyladenosine(37) in tRNA + diphosphate. Catalyzes the transfer of a dimethylallyl group onto the adenine at position 37 in tRNAs that read codons beginning with uridine, leading to the formation of N6-(dimethylallyl)adenosine (i(6)A). This chain is tRNA dimethylallyltransferase, found in Pseudomonas paraeruginosa (strain DSM 24068 / PA7) (Pseudomonas aeruginosa (strain PA7)).